Reading from the N-terminus, the 219-residue chain is 2,3-bisphosphoglycerate-dependent phosphoglycerate mutase 2 (219 aa).

Substrate contacts are provided by residues 8 to 15, 21 to 22, Arg58, 85 to 88, Lys96, 112 to 113, and 156 to 157; these read RHGQSIWN, TG, ERHY, RR, and GN. The active-site Tele-phosphohistidine intermediate is His9. Glu85 (proton donor/acceptor) is an active-site residue.

Belongs to the phosphoglycerate mutase family. BPG-dependent PGAM subfamily.

The enzyme catalyses (2R)-2-phosphoglycerate = (2R)-3-phosphoglycerate. The protein operates within carbohydrate degradation; glycolysis; pyruvate from D-glyceraldehyde 3-phosphate: step 3/5. Its function is as follows. Catalyzes the interconversion of 2-phosphoglycerate and 3-phosphoglycerate. This is 2,3-bisphosphoglycerate-dependent phosphoglycerate mutase 2 from Gloeobacter violaceus (strain ATCC 29082 / PCC 7421).